We begin with the raw amino-acid sequence, 114 residues long: Nucleoid-associated protein Tlet_0999 (114 aa).

This sequence belongs to the YbaB/EbfC family. As to quaternary structure, homodimer.

It localises to the cytoplasm. Its subcellular location is the nucleoid. Binds to DNA and alters its conformation. May be involved in regulation of gene expression, nucleoid organization and DNA protection. The sequence is that of Nucleoid-associated protein Tlet_0999 from Pseudothermotoga lettingae (strain ATCC BAA-301 / DSM 14385 / NBRC 107922 / TMO) (Thermotoga lettingae).